Consider the following 206-residue polypeptide: RNA pyrophosphohydrolase (206 aa).

A Nudix hydrolase domain is found at glycine 6–arginine 149. A Nudix box motif is present at residues glycine 38–glycine 59. The tract at residues methionine 175–serine 206 is disordered.

The protein belongs to the Nudix hydrolase family. RppH subfamily. Requires a divalent metal cation as cofactor.

Functionally, accelerates the degradation of transcripts by removing pyrophosphate from the 5'-end of triphosphorylated RNA, leading to a more labile monophosphorylated state that can stimulate subsequent ribonuclease cleavage. This chain is RNA pyrophosphohydrolase, found in Stenotrophomonas maltophilia (strain K279a).